Here is a 679-residue protein sequence, read N- to C-terminus: Protein hook (679 aa).

Residues 6–123 (NEMYYSLLEW…RLLQLVLGCA (118 aa)) enclose the Calponin-homology (CH) domain. 2 coiled-coil regions span residues 135 to 437 (EIMC…LKCG) and 480 to 574 (QTAL…QEIL).

This sequence belongs to the hook family. In terms of assembly, homodimer. Interacts with microtubules via its N-terminus.

It localises to the cytoplasm. It is found in the cytoskeleton. The protein localises to the endosome. The protein resides in the synapse. In terms of biological role, involved in endocytic trafficking by stabilizing organelles of the endocytic pathway. Probably acts as a cytoskeletal linker protein required to tether endosome vesicles to the cytoskeleton. Involved in modulation of endocytosis at stages required for down-regulation of membrane proteins that control synapse size. Not involved in synaptic vesicle recycling. Required in R7 cells for boss endocytosis into multivesicular bodies (MVBs). Has a role in regulating adult longevity. This chain is Protein hook, found in Drosophila simulans (Fruit fly).